The primary structure comprises 377 residues: L-arabinitol 4-dehydrogenase (377 aa).

Positions 66, 91, 92, 121, 124, 127, 135, and 176 each coordinate Zn(2+). Residues 203–204 (PI), D224, R229, I296, and 320–322 (QYR) each bind NAD(+).

It belongs to the zinc-containing alcohol dehydrogenase family. In terms of assembly, homotetramer. Requires Zn(2+) as cofactor. Post-translationally, the N-terminus is blocked.

The enzyme catalyses L-arabinitol + NAD(+) = L-xylulose + NADH + H(+). The protein operates within carbohydrate degradation; L-arabinose degradation via L-arabinitol; D-xylulose 5-phosphate from L-arabinose (fungal route): step 2/5. Functionally, catalyzes the NAD-dependent oxidation of L-arabinitol to L-xylulose in the fungal L-arabinose catabolic pathway. L-arabinose catabolism is important for using plant material as a carbon source. Can partially compensate for xylitol dehydrogenase in xdh1 mutants. Also oxidizes galactitol to L-xylo-3-hexulose as an alternative to the standard Leloir pathway for D-galactose metabolism. NADP cannot act as a cosubstrate. The chain is L-arabinitol 4-dehydrogenase (lad1) from Hypocrea jecorina (Trichoderma reesei).